Here is a 384-residue protein sequence, read N- to C-terminus: L-cysteine:1D-myo-inositol 2-amino-2-deoxy-alpha-D-glucopyranoside ligase (384 aa).

Zn(2+) is bound at residue cysteine 16. Residues 16 to 19 (CGIT), threonine 31, and 54 to 56 (NVT) each bind L-cysteinyl-5'-AMP. A 'HIGH' region motif is present at residues 18–28 (ITPYDATHLGH). Residues 159-164 (QSGGDP) carry the 'ERGGDP' region motif. Tryptophan 199 lines the L-cysteinyl-5'-AMP pocket. Residue cysteine 203 coordinates Zn(2+). L-cysteinyl-5'-AMP is bound at residue 221–223 (GSD). A Zn(2+)-binding site is contributed by histidine 228. Isoleucine 255 contacts L-cysteinyl-5'-AMP. A 'KMSKS' region motif is present at residues 261–265 (KMSKS).

It belongs to the class-I aminoacyl-tRNA synthetase family. MshC subfamily. Monomer. The cofactor is Zn(2+).

The enzyme catalyses 1D-myo-inositol 2-amino-2-deoxy-alpha-D-glucopyranoside + L-cysteine + ATP = 1D-myo-inositol 2-(L-cysteinylamino)-2-deoxy-alpha-D-glucopyranoside + AMP + diphosphate + H(+). Catalyzes the ATP-dependent condensation of GlcN-Ins and L-cysteine to form L-Cys-GlcN-Ins. In Mycobacterium leprae (strain Br4923), this protein is L-cysteine:1D-myo-inositol 2-amino-2-deoxy-alpha-D-glucopyranoside ligase.